Here is a 226-residue protein sequence, read N- to C-terminus: UPF0758 protein SPs0978 (226 aa).

An MPN domain is found at 103-225; it reads SVLTSVQVAE…YYSFREKSTL (123 aa). Zn(2+) is bound by residues H174, H176, and D187. Positions 174–187 match the JAMM motif motif; it reads HNHPSGNIEPSSND.

The protein belongs to the UPF0758 family.

This Streptococcus pyogenes serotype M3 (strain SSI-1) protein is UPF0758 protein SPs0978.